The primary structure comprises 60 residues: Large ribosomal subunit protein uL30 (60 aa).

The protein belongs to the universal ribosomal protein uL30 family. Part of the 50S ribosomal subunit.

The polypeptide is Large ribosomal subunit protein uL30 (Burkholderia ambifaria (strain MC40-6)).